We begin with the raw amino-acid sequence, 968 residues long: Ribonuclease E (968 aa).

In terms of domain architecture, S1 motif spans 39–119 (SNIYKGKITR…GTKGAALTTF (81 aa)). Mg(2+)-binding residues include aspartate 303 and aspartate 346. The Zn(2+) site is built by cysteine 404 and cysteine 407. The required for zinc-mediated homotetramerization and catalytic activity stretch occupies residues 404-407 (CPRC). The disordered stretch occupies residues 947–968 (IKNSAGAHSATNFSTSPVKKSE). Residues 955-968 (SATNFSTSPVKKSE) show a composition bias toward polar residues.

It belongs to the RNase E/G family. RNase E subfamily. As to quaternary structure, component of the RNA degradosome, which is a multiprotein complex involved in RNA processing and mRNA degradation. Within the RNA degradosome, RNase E assembles into a homotetramer formed by a dimer of dimers. It depends on Zn(2+) as a cofactor. Mg(2+) is required as a cofactor.

It is found in the cytoplasm. The protein localises to the cell inner membrane. It carries out the reaction Endonucleolytic cleavage of single-stranded RNA in A- and U-rich regions.. In terms of biological role, endoribonuclease that plays a central role in RNA processing and decay. Required for the maturation of 5S and 16S rRNAs and the majority of tRNAs. Also involved in the degradation of most mRNAs. The protein is Ribonuclease E of Buchnera aphidicola subsp. Schizaphis graminum (strain Sg).